A 202-amino-acid polypeptide reads, in one-letter code: Nucleoside triphosphate pyrophosphatase (202 aa).

Aspartate 79 functions as the Proton acceptor in the catalytic mechanism.

The protein belongs to the Maf family. It depends on a divalent metal cation as a cofactor.

The protein resides in the cytoplasm. It carries out the reaction a ribonucleoside 5'-triphosphate + H2O = a ribonucleoside 5'-phosphate + diphosphate + H(+). The catalysed reaction is a 2'-deoxyribonucleoside 5'-triphosphate + H2O = a 2'-deoxyribonucleoside 5'-phosphate + diphosphate + H(+). In terms of biological role, nucleoside triphosphate pyrophosphatase. May have a dual role in cell division arrest and in preventing the incorporation of modified nucleotides into cellular nucleic acids. This chain is Nucleoside triphosphate pyrophosphatase, found in Rhodopseudomonas palustris (strain BisB5).